Consider the following 334-residue polypeptide: Mitochondrial glycine transporter (334 aa).

3 Solcar repeats span residues 10–94 (SKSS…IRQA), 127–211 (LSNT…FKRR), and 234–318 (RAAA…LIMR). 6 consecutive transmembrane segments (helical) span residues 16-41 (FVAG…TRVQ), 69-95 (GTVP…RQAA), 133-158 (LLAG…VRYE), 186-209 (GFGA…EQFK), 238-264 (VNFS…KTRI), and 293-311 (GLGL…AWTL).

It belongs to the mitochondrial carrier (TC 2.A.29) family. SLC25A38 subfamily.

It localises to the mitochondrion inner membrane. It carries out the reaction glycine(in) = glycine(out). In terms of biological role, mitochondrial glycine transporter that imports glycine into the mitochondrial matrix. Plays an important role in providing glycine for the first enzymatic step in heme biosynthesis, the condensation of glycine with succinyl-CoA to produce 5-aminolevulinate (ALA) in the mitochondrial matrix. The sequence is that of Mitochondrial glycine transporter from Pyricularia oryzae (strain 70-15 / ATCC MYA-4617 / FGSC 8958) (Rice blast fungus).